The chain runs to 169 residues: Large ribosomal subunit protein uL10 (169 aa).

The protein belongs to the universal ribosomal protein uL10 family. Part of the ribosomal stalk of the 50S ribosomal subunit. The N-terminus interacts with L11 and the large rRNA to form the base of the stalk. The C-terminus forms an elongated spine to which L12 dimers bind in a sequential fashion forming a multimeric L10(L12)X complex.

In terms of biological role, forms part of the ribosomal stalk, playing a central role in the interaction of the ribosome with GTP-bound translation factors. This is Large ribosomal subunit protein uL10 from Rickettsia africae (strain ESF-5).